Reading from the N-terminus, the 255-residue chain is Phosphate import ATP-binding protein PstB (255 aa).

One can recognise an ABC transporter domain in the interval 9 to 250 (IAVQNLNFYY…PKIQRTEDYI (242 aa)). 41-48 (GPSGCGKS) contributes to the ATP binding site.

This sequence belongs to the ABC transporter superfamily. Phosphate importer (TC 3.A.1.7) family. In terms of assembly, the complex is composed of two ATP-binding proteins (PstB), two transmembrane proteins (PstC and PstA) and a solute-binding protein (PstS).

It localises to the cell inner membrane. The catalysed reaction is phosphate(out) + ATP + H2O = ADP + 2 phosphate(in) + H(+). Its function is as follows. Part of the ABC transporter complex PstSACB involved in phosphate import. Responsible for energy coupling to the transport system. The protein is Phosphate import ATP-binding protein PstB of Haemophilus influenzae (strain 86-028NP).